Reading from the N-terminus, the 355-residue chain is Uroporphyrinogen decarboxylase (355 aa).

Substrate contacts are provided by residues 27-31, F46, D77, Y154, T209, and H328; that span reads RQAGR.

This sequence belongs to the uroporphyrinogen decarboxylase family. In terms of assembly, homodimer.

The protein localises to the cytoplasm. It carries out the reaction uroporphyrinogen III + 4 H(+) = coproporphyrinogen III + 4 CO2. It functions in the pathway porphyrin-containing compound metabolism; protoporphyrin-IX biosynthesis; coproporphyrinogen-III from 5-aminolevulinate: step 4/4. Functionally, catalyzes the decarboxylation of four acetate groups of uroporphyrinogen-III to yield coproporphyrinogen-III. The polypeptide is Uroporphyrinogen decarboxylase (Vibrio vulnificus (strain CMCP6)).